Reading from the N-terminus, the 417-residue chain is MKTLIILKDLTKVFDNQLILRGINLEIKQNEFVTLLGPSGCGKTTILRILGGFENPSSGEVLFQEKSILNVAAHKRPINTVFQKYALFPHLNVFENVAFGLRLKDFNSKIKANLSLNKTHYQTNKANLSKTFHQELTKDLTQEKTTQITHNFNNQIETLTKDFETKQTALKCKKINKKEQEEQIQKEVLKYLKIMGLQGLEKRTIEQLSGGQQQRVAIARALINKPQVLLLDEPLSNLDLKLKQEMQYELKEIQKNSGITFLFVTHDQEEAFTMSDKVVVMNHGEIQQIGSPEDIYNEPANRFVAQFVGESNLIKGVMKDDFLVHFDNQTFNCVDKGFRKEENVDIVIRPEDIDIVSQGKGLITGIVQSIIFKGVHWEIDVKTAQRTYTIHTTDHVELNKQVDITFNPEDIHVMEIW.

The 304-residue stretch at 5–308 (IILKDLTKVF…PANRFVAQFV (304 aa)) folds into the ABC transporter domain. 37–44 (GPSGCGKT) contacts ATP. An insert region spans residues 105–177 (DFNSKIKANL…TALKCKKINK (73 aa)).

Belongs to the ABC transporter superfamily. Spermidine/putrescine importer (TC 3.A.1.11.1) family. In terms of assembly, the complex is composed of two ATP-binding proteins (PotA), two transmembrane proteins (PotB and PotC) and a solute-binding protein (PotD).

Its subcellular location is the cell membrane. It carries out the reaction ATP + H2O + polyamine-[polyamine-binding protein]Side 1 = ADP + phosphate + polyamineSide 2 + [polyamine-binding protein]Side 1.. In terms of biological role, part of the ABC transporter complex PotABCD involved in spermidine/putrescine import. Responsible for energy coupling to the transport system. This chain is Spermidine/putrescine import ATP-binding protein PotA, found in Onion yellows phytoplasma (strain OY-M).